The following is a 690-amino-acid chain: MAKDFLLEIGTEEIPAKFAPGVLNQLREQAQKHCQELRLDYQDLKVYTTPRRFAVLIQGLAEKQTDFTAEVKGPAVKAAYDAEGNPTKAAQGFARGQGVEPKDLFVQELNGVSYVYARKFELGQPTLQLLPKLCTDLITGLHFPKPMRWADLEFRFARPIRWIVALFGSEVIPFEFVGLASGKASRGHRTLGGPVTLDSPADYEKQMLQAFVMVDPEQRRQSVWEQIHALAAKVGGDVEKDDDLLDEVTHIIEYPTALLGEVAPNYMHLPEPVITTPMKEHQRYFPVRDKEGKLLPYFITVRNGDDHALAKVKAGNEKVLKARLEDAAFYYREDQKTPLAELVEKLDKVTYHEKLGSVRQRVERIRTLARGIAARLGMESKKQDLVERTALLAKADLVTLMVYDFPELQGIMGADYARMVGEKPEVCTGILEHYQPRFAGDELPQSYTGQIVSVADKLDAIVGAFGIGIQPTGSQDPYALRRQAQGVVGIILEAGWDISLEQLIAASYVNFAEQGISLLPLADLQSALQDFFQQRLRFVLQEQGARYDTLDAVLAQGSNQITRAARKAQVLAAKRETTEFVPYSQAYIRCLNLSKKAQTQPLDPKNLIDPTEIALAAALVQRQEAFAALIEKGDYAEAYALASELIPMIEALFNAVMIMVEDEILKQARLALLGECVAILGCLGDLSLLA.

Belongs to the class-II aminoacyl-tRNA synthetase family. Tetramer of two alpha and two beta subunits.

It localises to the cytoplasm. The catalysed reaction is tRNA(Gly) + glycine + ATP = glycyl-tRNA(Gly) + AMP + diphosphate. The sequence is that of Glycine--tRNA ligase beta subunit from Desulfitobacterium hafniense (strain Y51).